Here is a 431-residue protein sequence, read N- to C-terminus: Adenylosuccinate lyase (431 aa).

Residues 4 to 5, 67 to 69, and 93 to 94 contribute to the N(6)-(1,2-dicarboxyethyl)-AMP site; these read RY, RHD, and TS. H141 functions as the Proton donor/acceptor in the catalytic mechanism. A N(6)-(1,2-dicarboxyethyl)-AMP-binding site is contributed by Q212. S262 (proton donor/acceptor) is an active-site residue. N(6)-(1,2-dicarboxyethyl)-AMP is bound by residues S263, 268–270, N276, and 307–311; these read KRN and SAERI.

The protein belongs to the lyase 1 family. Adenylosuccinate lyase subfamily. As to quaternary structure, homodimer and homotetramer. Residues from neighboring subunits contribute catalytic and substrate-binding residues to each active site.

It catalyses the reaction N(6)-(1,2-dicarboxyethyl)-AMP = fumarate + AMP. It carries out the reaction (2S)-2-[5-amino-1-(5-phospho-beta-D-ribosyl)imidazole-4-carboxamido]succinate = 5-amino-1-(5-phospho-beta-D-ribosyl)imidazole-4-carboxamide + fumarate. It participates in purine metabolism; AMP biosynthesis via de novo pathway; AMP from IMP: step 2/2. The protein operates within purine metabolism; IMP biosynthesis via de novo pathway; 5-amino-1-(5-phospho-D-ribosyl)imidazole-4-carboxamide from 5-amino-1-(5-phospho-D-ribosyl)imidazole-4-carboxylate: step 2/2. Functionally, catalyzes two reactions in de novo purine nucleotide biosynthesis. Catalyzes the breakdown of 5-aminoimidazole- (N-succinylocarboxamide) ribotide (SAICAR or 2-[5-amino-1-(5-phospho-beta-D-ribosyl)imidazole-4-carboxamido]succinate) to 5-aminoimidazole-4-carboxamide ribotide (AICAR or 5-amino-1-(5-phospho-beta-D-ribosyl)imidazole-4-carboxamide) and fumarate, and of adenylosuccinate (ADS or N(6)-(1,2-dicarboxyethyl)-AMP) to adenosine monophosphate (AMP) and fumarate. The sequence is that of Adenylosuccinate lyase (purB) from Staphylococcus aureus (strain USA300).